The primary structure comprises 118 residues: Large ribosomal subunit protein bL19 (118 aa).

The protein belongs to the bacterial ribosomal protein bL19 family.

In terms of biological role, this protein is located at the 30S-50S ribosomal subunit interface and may play a role in the structure and function of the aminoacyl-tRNA binding site. In Aliarcobacter butzleri (strain RM4018) (Arcobacter butzleri), this protein is Large ribosomal subunit protein bL19.